Reading from the N-terminus, the 406-residue chain is Autotransporter heptosyltransferase TibC (406 aa).

ADP-D-glycero-beta-D-manno-heptose contacts are provided by threonine 107, leucine 108, and glycine 109. Aspartate 110 serves as the catalytic Proton acceptor. ADP-D-glycero-beta-D-manno-heptose is bound by residues glutamine 224, threonine 226, lysine 230, arginine 257, leucine 281, glycine 302, and glutamate 326. 4 residues coordinate Fe(3+): cysteine 339, cysteine 342, cysteine 358, and cysteine 370.

The protein belongs to the glycosyltransferase 9 family. In terms of assembly, homododecamer composed of 6 homodimers forming a ring. Fe(3+) serves as cofactor.

It catalyses the reaction ADP-D-glycero-beta-D-manno-heptose + L-seryl-[protein] = O-(D-glycero-alpha-D-manno-heptosyl)-L-seryl-[protein] + ADP + H(+). Its function is as follows. Glycosylates adhesin TibA. Specifically adds anomer D-glycero-beta-D-manno-heptose. Cannot use ADP-L-glycero-beta-D-manno-heptose as a sugar donor. The sequence is that of Autotransporter heptosyltransferase TibC from Escherichia coli O78:H11 (strain H10407 / ETEC).